Here is a 425-residue protein sequence, read N- to C-terminus: Dihydroorotase (425 aa).

Zn(2+)-binding residues include H56 and H58. Substrate contacts are provided by residues 58 to 60 (HYR) and N90. Zn(2+) contacts are provided by D148, H175, and H228. N274 serves as a coordination point for substrate. Residue D301 coordinates Zn(2+). Residue D301 is part of the active site. Residues H305 and 319 to 320 (FG) each bind substrate.

This sequence belongs to the metallo-dependent hydrolases superfamily. DHOase family. Class I DHOase subfamily. The cofactor is Zn(2+).

It catalyses the reaction (S)-dihydroorotate + H2O = N-carbamoyl-L-aspartate + H(+). Its pathway is pyrimidine metabolism; UMP biosynthesis via de novo pathway; (S)-dihydroorotate from bicarbonate: step 3/3. Its function is as follows. Catalyzes the reversible cyclization of carbamoyl aspartate to dihydroorotate. In Lactobacillus helveticus (strain DPC 4571), this protein is Dihydroorotase.